Here is a 359-residue protein sequence, read N- to C-terminus: UPF0283 membrane protein RHECIAT_CH0002430 (359 aa).

The segment at 1–50 (MSKPPSDPPRRPPAAFAYEDEASEPRNSGRQQQGRRKPESFSENIVVTPD) is disordered. 2 consecutive transmembrane segments (helical) span residues 77–97 (FGKIAAGAFGILLSLGLGLWT) and 111–131 (LGYAALGVLAIGILAVLALVI).

The protein belongs to the UPF0283 family.

The protein resides in the cell inner membrane. In Rhizobium etli (strain CIAT 652), this protein is UPF0283 membrane protein RHECIAT_CH0002430.